Reading from the N-terminus, the 422-residue chain is UDP-N-acetylmuramoylalanine--D-glutamate ligase (422 aa).

102 to 108 is an ATP binding site; the sequence is GTNGKTT.

Belongs to the MurCDEF family.

It is found in the cytoplasm. It carries out the reaction UDP-N-acetyl-alpha-D-muramoyl-L-alanine + D-glutamate + ATP = UDP-N-acetyl-alpha-D-muramoyl-L-alanyl-D-glutamate + ADP + phosphate + H(+). It participates in cell wall biogenesis; peptidoglycan biosynthesis. Its function is as follows. Cell wall formation. Catalyzes the addition of glutamate to the nucleotide precursor UDP-N-acetylmuramoyl-L-alanine (UMA). This is UDP-N-acetylmuramoylalanine--D-glutamate ligase from Helicobacter pylori (strain HPAG1).